We begin with the raw amino-acid sequence, 229 residues long: Potassium/proton antiporter CemA (229 aa).

The next 3 helical transmembrane spans lie at 6 to 26 (AFIP…ISLC), 107 to 127 (ILHF…SFWG), and 189 to 209 (ILSG…KYWI).

It belongs to the CemA family.

The protein resides in the plastid. It is found in the chloroplast inner membrane. It carries out the reaction K(+)(in) + H(+)(out) = K(+)(out) + H(+)(in). Functionally, contributes to K(+)/H(+) antiport activity by supporting proton efflux to control proton extrusion and homeostasis in chloroplasts in a light-dependent manner to modulate photosynthesis. Prevents excessive induction of non-photochemical quenching (NPQ) under continuous-light conditions. Indirectly promotes efficient inorganic carbon uptake into chloroplasts. The chain is Potassium/proton antiporter CemA from Arabis hirsuta (Hairy rock-cress).